The primary structure comprises 560 residues: Serine palmitoyltransferase 2 (560 aa).

The helical transmembrane segment at 65–85 threads the bilayer; that stretch reads PMLVAVLTYVGYGVLTLFGYL. N6-(pyridoxal phosphate)lysine is present on Lys-377.

It belongs to the class-II pyridoxal-phosphate-dependent aminotransferase family. Component of the serine palmitoyltransferase (SPT) complex, which is composed of SPTLC1, SPTLC2 or SPTLC3 and SPTSSA or SPTSSB. The heterodimer consisting of SPTLC1 and SPTLC2/SPTLC3 forms the catalytic core of the enzyme, while SPTSSA or SPTSSB subunits determine substrate specificity. SPT also interacts with ORMDL proteins, especially ORMDL3, which negatively regulate SPT activity in the presence of ceramides. Forms dimers of heterodimers with SPTLC1. Pyridoxal 5'-phosphate serves as cofactor. As to expression, expressed in astrocytes.

The protein localises to the endoplasmic reticulum membrane. The enzyme catalyses L-serine + hexadecanoyl-CoA + H(+) = 3-oxosphinganine + CO2 + CoA. It carries out the reaction octadecanoyl-CoA + L-serine + H(+) = 3-oxoeicosasphinganine + CO2 + CoA. It participates in lipid metabolism; sphingolipid metabolism. With respect to regulation, SPT complex catalytic activity is negatively regulated by ORMDL proteins, including ORMDL3, in the presence of ceramides. This mechanism allows to maintain ceramide levels at sufficient concentrations for the production of complex sphingolipids, but which prevents the accumulation of ceramides to levels that trigger apoptosis. Component of the serine palmitoyltransferase multisubunit enzyme (SPT) that catalyzes the initial and rate-limiting step in sphingolipid biosynthesis by condensing L-serine and activated acyl-CoA (most commonly palmitoyl-CoA) to form long-chain bases. The SPT complex is composed of SPTLC1, SPTLC2 or SPTLC3 and SPTSSA or SPTSSB. Within this complex, the heterodimer consisting of SPTLC1 and SPTLC2/SPTLC3 forms the catalytic core. The composition of the serine palmitoyltransferase (SPT) complex determines the substrate preference. The SPTLC1-SPTLC2-SPTSSA complex shows a strong preference for C16-CoA substrate, while the SPTLC1-SPTLC3-SPTSSA isozyme uses both C14-CoA and C16-CoA as substrates, with a slight preference for C14-CoA. The SPTLC1-SPTLC2-SPTSSB complex shows a strong preference for C18-CoA substrate, while the SPTLC1-SPTLC3-SPTSSB isozyme displays an ability to use a broader range of acyl-CoAs, without apparent preference. Crucial for adipogenesis. The polypeptide is Serine palmitoyltransferase 2 (Rattus norvegicus (Rat)).